Consider the following 429-residue polypeptide: METFLFTSESVNEGHPDKLCDQISDAVLDACLAQDPDSKVACETCTKTNMVMVFGEITTKADVDYEKIVRDTCRSIGFVSDDVGLDADKCKVLVNIEQQSPDIAQGVHGHFTKRPEEIGAGDQGHMFGYATDETPEFMPLSHVLATKLGARLTEVRKNGTCPWLRPDGKTQVTVEYYNENGARVPVRVHTVLISTQHDETVTNDEIAADLKEHVIKPVIPEKYLDEKTIFHLNPSGRFVIGGPHGDAGLTGRKIIIDTYGGWGAHGGGAFSGKDPTKVDRSGAYIVRQAAKSIVANGLARRCIVQVSYAIGVPEPLSVYVDTYGTGKIPDKEILKIVKENFDFRPGMITINLDLKRGGNSRFLKTAAYGHFGRDDPDFTWEVVKPSSGRSLNLKVLVVIIPACFIELIIGCLMLMLNSPYSIEVSYMMI.

Glu9 is a binding site for Mg(2+). An ATP-binding site is contributed by His15. A K(+)-binding site is contributed by Glu43. Residues Glu56 and Gln99 each coordinate L-methionine. Residues 167-169 (DGK), 235-238 (SGRF), Asp246, 252-253 (RK), Ala269, Lys273, and Lys277 each bind ATP. Asp246 is a binding site for L-methionine. Position 277 (Lys277) interacts with L-methionine.

This sequence belongs to the AdoMet synthase family. As to quaternary structure, homotetramer. Requires Mn(2+) as cofactor. Mg(2+) serves as cofactor. It depends on Co(2+) as a cofactor. K(+) is required as a cofactor.

It localises to the cytoplasm. It carries out the reaction L-methionine + ATP + H2O = S-adenosyl-L-methionine + phosphate + diphosphate. The protein operates within amino-acid biosynthesis; S-adenosyl-L-methionine biosynthesis; S-adenosyl-L-methionine from L-methionine: step 1/1. Its function is as follows. Catalyzes the formation of S-adenosylmethionine from methionine and ATP. The reaction comprises two steps that are both catalyzed by the same enzyme: formation of S-adenosylmethionine (AdoMet) and triphosphate, and subsequent hydrolysis of the triphosphate. The protein is S-adenosylmethionine synthase (SAMS) of Carica papaya (Papaya).